Reading from the N-terminus, the 481-residue chain is Glutamyl-tRNA(Gln) amidotransferase subunit A (481 aa).

Active-site charge relay system residues include Lys74 and Ser149. The active-site Acyl-ester intermediate is the Ser173.

This sequence belongs to the amidase family. GatA subfamily. Heterotrimer of A, B and C subunits.

The catalysed reaction is L-glutamyl-tRNA(Gln) + L-glutamine + ATP + H2O = L-glutaminyl-tRNA(Gln) + L-glutamate + ADP + phosphate + H(+). Functionally, allows the formation of correctly charged Gln-tRNA(Gln) through the transamidation of misacylated Glu-tRNA(Gln) in organisms which lack glutaminyl-tRNA synthetase. The reaction takes place in the presence of glutamine and ATP through an activated gamma-phospho-Glu-tRNA(Gln). This is Glutamyl-tRNA(Gln) amidotransferase subunit A from Francisella tularensis subsp. holarctica (strain FTNF002-00 / FTA).